Consider the following 885-residue polypeptide: Chitin synthase 3 (885 aa).

Residues 1–59 (MASQYPGHQLDDIPSTNVYRPPPRHEDDEAEHALLHQNSAYQSQYDDPHSRPLTPGQES) are disordered. Residues 23–34 (PRHEDDEAEHAL) show a composition bias toward basic and acidic residues. Residues 36–45 (HQNSAYQSQY) show a composition bias toward polar residues. 6 consecutive transmembrane segments (helical) span residues 565–585 (FFLH…WFSL), 620–640 (IINT…FILA), 650–670 (VAYI…IVLS), 707–727 (IVII…FLYM), 735–755 (SFAQ…IYAF), and 837–857 (LVAT…SDSL).

This sequence belongs to the chitin synthase family. Class III subfamily.

It localises to the cell membrane. The enzyme catalyses [(1-&gt;4)-N-acetyl-beta-D-glucosaminyl](n) + UDP-N-acetyl-alpha-D-glucosamine = [(1-&gt;4)-N-acetyl-beta-D-glucosaminyl](n+1) + UDP + H(+). In terms of biological role, polymerizes chitin, a structural polymer of the cell wall and septum, by transferring the sugar moiety of UDP-GlcNAc to the non-reducing end of the growing chitin polymer. Is not only stable at different pH, but is also able to tolerate a broad temperature range. With CHS2, plays an important role in virulence. The protein is Chitin synthase 3 of Exophiala dermatitidis (Black yeast-like fungus).